The sequence spans 411 residues: F-box/kelch-repeat protein At3g61590 (411 aa).

In terms of domain architecture, F-box spans 37 to 83 (FSMDSLLPDDLLERILSFLPIASIFRAGTVCKRWNEIVSSRRFLCNF). 6 Kelch repeats span residues 81–135 (CNFS…SSCG), 137–178 (VCFM…MSTS), 196–246 (SIVK…ICNN), 251–299 (MIYS…LMNL), 302–350 (RLVI…EFDE), and 352–401 (FASS…FTGF).

In terms of assembly, part of a SCF (ASK-cullin-F-box) protein ligase complex. Interacts with SKP1A/ASK1, SKP1B/ASK2, ASK3, ASK9, ASK11, ASK12, ASK13, ASK14, ASK16 and ASK18.

Its pathway is protein modification; protein ubiquitination. Its function is as follows. Component of SCF(ASK-cullin-F-box) E3 ubiquitin ligase complexes, which may mediate the ubiquitination and subsequent proteasomal degradation of target proteins. The polypeptide is F-box/kelch-repeat protein At3g61590 (Arabidopsis thaliana (Mouse-ear cress)).